The sequence spans 91 residues: Small ribosomal subunit protein uS17 (91 aa).

Belongs to the universal ribosomal protein uS17 family. As to quaternary structure, part of the 30S ribosomal subunit.

Functionally, one of the primary rRNA binding proteins, it binds specifically to the 5'-end of 16S ribosomal RNA. In Acidithiobacillus ferrooxidans (strain ATCC 23270 / DSM 14882 / CIP 104768 / NCIMB 8455) (Ferrobacillus ferrooxidans (strain ATCC 23270)), this protein is Small ribosomal subunit protein uS17.